The chain runs to 556 residues: Sensory neuron membrane protein 2 (556 aa).

Residues 1–6 lie on the Cytoplasmic side of the membrane; it reads MIHWSL. Residues 7–27 form a helical membrane-spanning segment; it reads IVSALGVCVAVLGGYCGWILF. Residues 28-522 lie on the Extracellular side of the membrane; sequence PNMVHKKVEQ…KLINTLKTLN (495 aa). Residues asparagine 66, asparagine 274, asparagine 310, and asparagine 324 are each glycosylated (N-linked (GlcNAc...) asparagine). 2 disulfide bridges follow: cysteine 320-cysteine 388 and cysteine 349-cysteine 415. A helical transmembrane segment spans residues 523–543; sequence IVHWATLCGGIGVAVACLIYY. Residues 544–556 lie on the Cytoplasmic side of the membrane; it reads IYQRGRVVEPPVK.

It belongs to the CD36 family. Detected in the head and to a lesser extent in legs and wings.

The protein resides in the cell membrane. Plays an olfactory role that is not restricted to pheromone sensitivity. The chain is Sensory neuron membrane protein 2 from Drosophila melanogaster (Fruit fly).